A 259-amino-acid chain; its full sequence is Kallikrein 1-related peptidase b22 (259 aa).

Positions 1–17 are cleaved as a signal peptide; it reads MRFLILFLTLSLGGIDA. The propeptide at 18 to 24 is activation peptide; that stretch reads APPVQSR. Residues 25–256 enclose the Peptidase S1 domain; it reads ILGGFKCEKN…FTSWIKDTMA (232 aa). Cystine bridges form between C31-C171, C50-C66, C150-C217, C182-C196, and C207-C232. H65 functions as the Charge relay system in the catalytic mechanism. N-linked (GlcNAc...) asparagine glycosylation is present at N102. The active-site Charge relay system is D118. Catalysis depends on S211, which acts as the Charge relay system.

It belongs to the peptidase S1 family. Kallikrein subfamily.

The catalysed reaction is Preferential cleavage of Arg-|-Xaa bonds in small molecule substrates. Highly selective action to release kallidin (lysyl-bradykinin) from kininogen involves hydrolysis of Met-|-Xaa or Leu-|-Xaa.. Functionally, glandular kallikreins cleave Met-Lys and Arg-Ser bonds in kininogen to release Lys-bradykinin. This is Kallikrein 1-related peptidase b22 (Klk1b22) from Mus musculus (Mouse).